The sequence spans 171 residues: Shikimate kinase (171 aa).

14 to 19 is a binding site for ATP; it reads GAGKST. Serine 18 contacts Mg(2+). Substrate is bound by residues aspartate 36, arginine 60, and glycine 82. Position 120 (arginine 120) interacts with ATP. Arginine 139 provides a ligand contact to substrate. Glutamine 156 contributes to the ATP binding site.

This sequence belongs to the shikimate kinase family. As to quaternary structure, monomer. Mg(2+) is required as a cofactor.

It localises to the cytoplasm. It catalyses the reaction shikimate + ATP = 3-phosphoshikimate + ADP + H(+). Its pathway is metabolic intermediate biosynthesis; chorismate biosynthesis; chorismate from D-erythrose 4-phosphate and phosphoenolpyruvate: step 5/7. In terms of biological role, catalyzes the specific phosphorylation of the 3-hydroxyl group of shikimic acid using ATP as a cosubstrate. The polypeptide is Shikimate kinase (Shewanella sp. (strain ANA-3)).